A 95-amino-acid polypeptide reads, in one-letter code: Co-chaperonin GroES (95 aa).

Belongs to the GroES chaperonin family. Heptamer of 7 subunits arranged in a ring. Interacts with the chaperonin GroEL.

It localises to the cytoplasm. Functionally, together with the chaperonin GroEL, plays an essential role in assisting protein folding. The GroEL-GroES system forms a nano-cage that allows encapsulation of the non-native substrate proteins and provides a physical environment optimized to promote and accelerate protein folding. GroES binds to the apical surface of the GroEL ring, thereby capping the opening of the GroEL channel. In Desulfosudis oleivorans (strain DSM 6200 / JCM 39069 / Hxd3) (Desulfococcus oleovorans), this protein is Co-chaperonin GroES.